The chain runs to 525 residues: Phosphatidylinositol 4-kinase alpha 2 (525 aa).

The segment at 163–278 (SDVRQHIVDG…VKPQACIFKV (116 aa)) is pleckstrin homology (PH) domain conferring phosphoinositide binding specificity. One can recognise a PI3K/PI4K catalytic domain in the interval 239–509 (VDSGIPLQSA…VCTDAYNKWT (271 aa)). The tract at residues 245–251 (LQSAAKV) is G-loop. The segment at 373–381 (QPKDRHNGN) is catalytic loop. The interval 392–417 (HIDFGFILETSPGGNMRFENAHFKLS) is activation loop.

This sequence belongs to the PI3/PI4-kinase family. Type III PI4K subfamily.

The protein localises to the membrane. The catalysed reaction is a 1,2-diacyl-sn-glycero-3-phospho-(1D-myo-inositol) + ATP = a 1,2-diacyl-sn-glycero-3-phospho-(1D-myo-inositol 4-phosphate) + ADP + H(+). Acts on phosphatidylinositol (PtdIns) in the first committed step in the production of the second messenger inositol-1,4,5,-trisphosphate. This is Phosphatidylinositol 4-kinase alpha 2 (PI4KA2) from Arabidopsis thaliana (Mouse-ear cress).